The primary structure comprises 224 residues: Lipoprotein-releasing system ATP-binding protein LolD (224 aa).

Positions 5–224 (LVLDGLTKAY…VVRLEAGRVV (220 aa)) constitute an ABC transporter domain. 42 to 49 (APSGAGKS) serves as a coordination point for ATP.

Belongs to the ABC transporter superfamily. Lipoprotein translocase (TC 3.A.1.125) family. The complex is composed of two ATP-binding proteins (LolD) and two transmembrane proteins (LolC and LolE).

The protein resides in the cell inner membrane. Part of the ABC transporter complex LolCDE involved in the translocation of mature outer membrane-directed lipoproteins, from the inner membrane to the periplasmic chaperone, LolA. Responsible for the formation of the LolA-lipoprotein complex in an ATP-dependent manner. The polypeptide is Lipoprotein-releasing system ATP-binding protein LolD (Cereibacter sphaeroides (strain ATCC 17023 / DSM 158 / JCM 6121 / CCUG 31486 / LMG 2827 / NBRC 12203 / NCIMB 8253 / ATH 2.4.1.) (Rhodobacter sphaeroides)).